The chain runs to 508 residues: Light-independent protochlorophyllide reductase subunit B (508 aa).

Asp36 lines the [4Fe-4S] cluster pocket. The active-site Proton donor is the Asp294. 429–430 (GM) is a substrate binding site.

Belongs to the ChlB/BchB/BchZ family. Protochlorophyllide reductase is composed of three subunits; ChlL, ChlN and ChlB. Forms a heterotetramer of two ChlB and two ChlN subunits. [4Fe-4S] cluster is required as a cofactor.

The enzyme catalyses chlorophyllide a + oxidized 2[4Fe-4S]-[ferredoxin] + 2 ADP + 2 phosphate = protochlorophyllide a + reduced 2[4Fe-4S]-[ferredoxin] + 2 ATP + 2 H2O. Its pathway is porphyrin-containing compound metabolism; chlorophyll biosynthesis (light-independent). In terms of biological role, component of the dark-operative protochlorophyllide reductase (DPOR) that uses Mg-ATP and reduced ferredoxin to reduce ring D of protochlorophyllide (Pchlide) to form chlorophyllide a (Chlide). This reaction is light-independent. The NB-protein (ChlN-ChlB) is the catalytic component of the complex. This chain is Light-independent protochlorophyllide reductase subunit B, found in Synechococcus elongatus (strain ATCC 33912 / PCC 7942 / FACHB-805) (Anacystis nidulans R2).